The sequence spans 590 residues: Polypeptide N-acetylgalactosaminyltransferase 8 (590 aa).

Residues 1–11 (MCLDIWRHKKK) lie on the Cytoplasmic side of the membrane. A helical; Signal-anchor for type II membrane protein transmembrane segment spans residues 12–31 (VLPLLLLMAIGSIIYYLYTL). Topologically, residues 32–590 (KLEGERDESA…QHFWDNVKTQ (559 aa)) are lumenal. A glycan (N-linked (GlcNAc...) asparagine) is linked at Asn77. 5 cysteine pairs are disulfide-bonded: Cys117–Cys345, Cys336–Cys419, Cys459–Cys475, Cys502–Cys517, and Cys546–Cys561. The segment at 127 to 236 (LPSVSVVITY…KGWLEPLIAP (110 aa)) is catalytic subdomain A. Asp168 is a binding site for substrate. Asp220 is a Mn(2+) binding site. Substrate is bound at residue Ser221. His222 contacts Mn(2+). N-linked (GlcNAc...) asparagine glycosylation occurs at Asn241. The catalytic subdomain B stretch occupies residues 291–353 (PHKNPIMNGG…PCSRVGHLFR (63 aa)). Trp322 serves as a coordination point for substrate. His350 is a binding site for Mn(2+). Residue Arg353 participates in substrate binding. Positions 446 to 573 (ASGVLQSISS…KNHKQQWKFG (128 aa)) constitute a Ricin B-type lectin domain.

It belongs to the glycosyltransferase 2 family. GalNAc-T subfamily. Mn(2+) is required as a cofactor. In terms of tissue distribution, expressed in developing oocytes and egg chambers. During embryonic stages 9-11, expressed in the primordium of the foregut, midgut and hindgut. During embryonic stages 12-13, expressed in the posterior midgut and hindgut. During embryonic stages 14-15, expression continues in the hindgut. No expression detected during embryonic stages 16-17 or in third instar larvae imaginal disks.

The protein resides in the golgi apparatus membrane. It carries out the reaction L-seryl-[protein] + UDP-N-acetyl-alpha-D-galactosamine = a 3-O-[N-acetyl-alpha-D-galactosaminyl]-L-seryl-[protein] + UDP + H(+). The enzyme catalyses L-threonyl-[protein] + UDP-N-acetyl-alpha-D-galactosamine = a 3-O-[N-acetyl-alpha-D-galactosaminyl]-L-threonyl-[protein] + UDP + H(+). The protein operates within protein modification; protein glycosylation. Catalyzes the initial reaction in O-linked oligosaccharide biosynthesis, the transfer of an N-acetyl-D-galactosamine residue to a serine or threonine residue on the protein receptor. It can both act as a peptide transferase that transfers GalNAc onto unmodified peptide substrates, and as a glycopeptide transferase that requires the prior addition of a GalNAc on a peptide before adding additional GalNAc moieties. Prefers both EA2 and the diglycosylated Muc5AC-3/13 as substrates, albeit at very low levels fro Muc5AC-3/13. This is Polypeptide N-acetylgalactosaminyltransferase 8 from Drosophila melanogaster (Fruit fly).